The sequence spans 436 residues: GTPase Der (436 aa).

EngA-type G domains are found at residues Pro4–Ser167 and Ile175–Asn351. GTP contacts are provided by residues Gly10–Ser17, Asp57–Ile61, Asn119–Asp122, Gly181–Ser188, Asp229–Met233, and Asn294–Asp297. The 85-residue stretch at Leu352–Lys436 folds into the KH-like domain.

This sequence belongs to the TRAFAC class TrmE-Era-EngA-EngB-Septin-like GTPase superfamily. EngA (Der) GTPase family. Associates with the 50S ribosomal subunit.

GTPase that plays an essential role in the late steps of ribosome biogenesis. The protein is GTPase Der of Enterococcus faecalis (strain ATCC 700802 / V583).